The sequence spans 96 residues: Putative membrane protein insertion efficiency factor (96 aa).

A compositionally biased stretch (low complexity) spans 71-84; the sequence is THGTAAAPPASAAP. The interval 71–96 is disordered; it reads THGTAAAPPASAAPGRPPVTVRLPRP.

Belongs to the UPF0161 family.

Its subcellular location is the cell inner membrane. Functionally, could be involved in insertion of integral membrane proteins into the membrane. The sequence is that of Putative membrane protein insertion efficiency factor from Cupriavidus metallidurans (strain ATCC 43123 / DSM 2839 / NBRC 102507 / CH34) (Ralstonia metallidurans).